The sequence spans 602 residues: Elongation factor 4 (602 aa).

The region spanning 7–189 (SKIRNFCIIA…AIVRRVPPPQ (183 aa)) is the tr-type G domain. Residues 19 to 24 (DHGKST) and 136 to 139 (NKVD) contribute to the GTP site.

The protein belongs to the TRAFAC class translation factor GTPase superfamily. Classic translation factor GTPase family. LepA subfamily.

The protein localises to the cell inner membrane. It carries out the reaction GTP + H2O = GDP + phosphate + H(+). In terms of biological role, required for accurate and efficient protein synthesis under certain stress conditions. May act as a fidelity factor of the translation reaction, by catalyzing a one-codon backward translocation of tRNAs on improperly translocated ribosomes. Back-translocation proceeds from a post-translocation (POST) complex to a pre-translocation (PRE) complex, thus giving elongation factor G a second chance to translocate the tRNAs correctly. Binds to ribosomes in a GTP-dependent manner. The polypeptide is Elongation factor 4 (Prochlorococcus marinus (strain MIT 9301)).